Reading from the N-terminus, the 544-residue chain is Chaperonin GroEL (544 aa).

Residues 30–33, K51, 87–91, G415, and D495 contribute to the ATP site; these read TLGP and DGTTT.

This sequence belongs to the chaperonin (HSP60) family. Forms a cylinder of 14 subunits composed of two heptameric rings stacked back-to-back. Interacts with the co-chaperonin GroES.

It is found in the cytoplasm. The catalysed reaction is ATP + H2O + a folded polypeptide = ADP + phosphate + an unfolded polypeptide.. Its function is as follows. Together with its co-chaperonin GroES, plays an essential role in assisting protein folding. The GroEL-GroES system forms a nano-cage that allows encapsulation of the non-native substrate proteins and provides a physical environment optimized to promote and accelerate protein folding. The polypeptide is Chaperonin GroEL (Aeromonas salmonicida (strain A449)).